Consider the following 100-residue polypeptide: NADH-quinone oxidoreductase subunit K (100 aa).

The next 3 helical transmembrane spans lie at 4–24, 28–48, and 60–80; these read YEYY…GVIV, IIAM…AFVA, and VFVF…LGLI.

This sequence belongs to the complex I subunit 4L family. NDH-1 is composed of 14 different subunits. Subunits NuoA, H, J, K, L, M, N constitute the membrane sector of the complex.

The protein localises to the cell inner membrane. It catalyses the reaction a quinone + NADH + 5 H(+)(in) = a quinol + NAD(+) + 4 H(+)(out). NDH-1 shuttles electrons from NADH, via FMN and iron-sulfur (Fe-S) centers, to quinones in the respiratory chain. The immediate electron acceptor for the enzyme in this species is believed to be ubiquinone. Couples the redox reaction to proton translocation (for every two electrons transferred, four hydrogen ions are translocated across the cytoplasmic membrane), and thus conserves the redox energy in a proton gradient. This is NADH-quinone oxidoreductase subunit K from Sulfurihydrogenibium azorense (strain DSM 15241 / OCM 825 / Az-Fu1).